We begin with the raw amino-acid sequence, 115 residues long: Glutaredoxin 4 (115 aa).

The 103-residue stretch at 5–107 (IEKIQRQIAE…QLIKETAAKY (103 aa)) folds into the Glutaredoxin domain. A glutathione-binding site is contributed by Lys22. Residue Cys30 participates in [2Fe-2S] cluster binding. Residues Arg59, Phe71, and 84–85 (CD) contribute to the glutathione site.

The protein belongs to the glutaredoxin family. Monothiol subfamily. As to quaternary structure, homodimer.

It is found in the cytoplasm. Functionally, monothiol glutaredoxin involved in the biogenesis of iron-sulfur clusters. This is Glutaredoxin 4 (grxD) from Shigella flexneri.